We begin with the raw amino-acid sequence, 316 residues long: Pantothenate kinase (316 aa).

Residue 95–102 (GSVAVGKS) participates in ATP binding.

This sequence belongs to the prokaryotic pantothenate kinase family.

Its subcellular location is the cytoplasm. It carries out the reaction (R)-pantothenate + ATP = (R)-4'-phosphopantothenate + ADP + H(+). Its pathway is cofactor biosynthesis; coenzyme A biosynthesis; CoA from (R)-pantothenate: step 1/5. In Shewanella woodyi (strain ATCC 51908 / MS32), this protein is Pantothenate kinase.